The primary structure comprises 817 residues: Neurabin-2 (817 aa).

2 actin-binding regions span residues 1–154 (MMKT…FERS) and 164–283 (EAAA…QHRV). The segment at 1-165 (MMKTEPRGPG…PAAAGGDKEA (165 aa)) is disordered. Phosphoserine is present on residues Ser15 and Ser17. The span at 44 to 58 (GAHHKKYGSNVHRIK) shows a compositional bias: basic residues. 3 positions are modified to phosphoserine: Ser94, Ser100, and Ser116. The interaction with D(2) dopamine receptor stretch occupies residues 100–371 (SLNENVDHSA…PERGVGNGRA (272 aa)). Pro residues predominate over residues 131 to 141 (SAQPAPPPHPP). The tract at residues 169 to 255 (RLLRQERAGL…KRSRVFQPPP (87 aa)) is interaction with ADRA2A, ADRA2B and ADRA2C. The residue at position 192 (Ser192) is a Phosphoserine. Residue Thr193 is modified to Phosphothreonine. Ser205 is subject to Phosphoserine. The residue at position 207 (Thr207) is a Phosphothreonine. The segment at 216-447 (EKADSRTGLH…SEEEDPAPSR (232 aa)) is disordered. Over residues 252-261 (QPPPPPPPAP) the composition is skewed to pro residues. The span at 291–302 (KPREVRKIKPVE) shows a compositional bias: basic and acidic residues. Low complexity predominate over residues 333-342 (STVATAASPA). Positions 344-356 (EEPKAQAAPEKEA) are enriched in basic and acidic residues. Over residues 410 to 425 (LEEDDEDDEEDGEPPY) the composition is skewed to acidic residues. The interaction with protein phosphatase 1 stretch occupies residues 417–494 (DEEDGEPPYE…LEKRVERLEL (78 aa)). Residue Ser438 is modified to Phosphoserine. A PP1-binding motif motif is present at residues 447-451 (RKIHF). The segment at 480 to 525 (SAEYELEKRVERLELFPVELEKDSEGLGISIIGMGAGADMGLEKLG) is interaction with RGS2. A PDZ domain is found at 496 to 584 (PVELEKDSEG…RVRFMIGRER (89 aa)). An interaction with TGN38 region spans residues 595–816 (IQQTLEQERW…NLQTLRNSNS (222 aa)). Ser658 is subject to Phosphoserine. Residues 671-788 (FKELQIKHAV…QRRVLEESEL (118 aa)) adopt a coiled-coil conformation.

As to quaternary structure, interacts with DCLK2. Possibly exists as a homodimer, homotrimer or a homotetramer. Interacts with F-actin, PPP1CA, neurabin-1, TGN38 and D(2) dopamine receptor. Interacts with RGS1, RGS2, RGS4, RGS19 and ADRA1B, ADRA2A, ADRA2B, ADRA2C, CDKN2A, PPP1R2, RASGFR1 and TIAM1. Interacts (via C-terminus) with SPATA13 (via C-terminal tail). Interacts with ADRA2B. Post-translationally, stimulation of D1 (but not D2) dopamine receptors induces Ser-94 phosphorylation. Dephosphorylation of Ser-94 is mediated mainly by PP1 and to a lesser extent by PP2A. Phosphorylation of spinophilin disrupts its association with F-actin, but does not affect its binding to PP1.

It localises to the cytoplasm. The protein localises to the cytoskeleton. The protein resides in the nucleus. Its subcellular location is the cell projection. It is found in the dendritic spine. It localises to the postsynaptic density. The protein localises to the synapse. The protein resides in the cell junction. Its subcellular location is the adherens junction. It is found in the cell membrane. It localises to the lamellipodium. The protein localises to the filopodium. The protein resides in the ruffle membrane. Seems to act as a scaffold protein in multiple signaling pathways. Modulates excitatory synaptic transmission and dendritic spine morphology. Binds to actin filaments (F-actin) and shows cross-linking activity. Binds along the sides of the F-actin. May play an important role in linking the actin cytoskeleton to the plasma membrane at the synaptic junction. Believed to target protein phosphatase 1/PP1 to dendritic spines, which are rich in F-actin, and regulates its specificity toward ion channels and other substrates, such as AMPA-type and NMDA-type glutamate receptors. Plays a role in regulation of G-protein coupled receptor signaling, including dopamine D2 receptors and alpha-adrenergic receptors. May establish a signaling complex for dopaminergic neurotransmission through D2 receptors by linking receptors downstream signaling molecules and the actin cytoskeleton. Binds to ADRA1B and RGS2 and mediates regulation of ADRA1B signaling. May confer to Rac signaling specificity by binding to both, RacGEFs and Rac effector proteins. Probably regulates p70 S6 kinase activity by forming a complex with TIAM1. Required for hepatocyte growth factor (HGF)-induced cell migration. In Homo sapiens (Human), this protein is Neurabin-2 (PPP1R9B).